Consider the following 439-residue polypeptide: Histidinol dehydrogenase (439 aa).

NAD(+) contacts are provided by Tyr129, Gln193, and Asn222. Positions 245, 267, and 270 each coordinate substrate. Residues Gln267 and His270 each coordinate Zn(2+). Residues Glu336 and His337 each act as proton acceptor in the active site. Positions 337, 370, 424, and 429 each coordinate substrate. Asp370 is a Zn(2+) binding site. His429 contacts Zn(2+).

The protein belongs to the histidinol dehydrogenase family. Requires Zn(2+) as cofactor.

The catalysed reaction is L-histidinol + 2 NAD(+) + H2O = L-histidine + 2 NADH + 3 H(+). Its pathway is amino-acid biosynthesis; L-histidine biosynthesis; L-histidine from 5-phospho-alpha-D-ribose 1-diphosphate: step 9/9. Functionally, catalyzes the sequential NAD-dependent oxidations of L-histidinol to L-histidinaldehyde and then to L-histidine. This chain is Histidinol dehydrogenase, found in Cutibacterium acnes (strain DSM 16379 / KPA171202) (Propionibacterium acnes).